The primary structure comprises 363 residues: MPVLLDPENALALDVLLAGIDAQGLDWHLSAPDAADLPRIRGIGTLSSAGNEEISFLSNPRYQNQLATTRAAAVIVTPDVAQARQEQGASGHVLVVCKHPYLLYARLAQWFERASRPAGPAGVHPSAVVDPSAEIDADVRVGAQCVIEAGARIGRGARLGPGCVIGAGSTVGADSLLHPRVTLYAGVHVGERAIIHSGAVLGADGFGFAPDPTLGRGAWGKIPQLGEVRVGNDVEIGANTTIDRGALDDTIVGDGVKLDNQIMVAHNVRIGAHTAIAACVGIAGSTTIGERCTIGGASMLSGHLAIADDVNISGGTAVTSNIAKAGRYTGVYPYAEHSEWQRNAAVIQQLALLRRRLRALERE.

His-266 acts as the Proton acceptor in catalysis.

The protein belongs to the transferase hexapeptide repeat family. LpxD subfamily. Homotrimer.

It carries out the reaction a UDP-3-O-[(3R)-3-hydroxyacyl]-alpha-D-glucosamine + a (3R)-hydroxyacyl-[ACP] = a UDP-2-N,3-O-bis[(3R)-3-hydroxyacyl]-alpha-D-glucosamine + holo-[ACP] + H(+). The protein operates within bacterial outer membrane biogenesis; LPS lipid A biosynthesis. Functionally, catalyzes the N-acylation of UDP-3-O-acylglucosamine using 3-hydroxyacyl-ACP as the acyl donor. Is involved in the biosynthesis of lipid A, a phosphorylated glycolipid that anchors the lipopolysaccharide to the outer membrane of the cell. This chain is UDP-3-O-acylglucosamine N-acyltransferase, found in Bordetella pertussis (strain Tohama I / ATCC BAA-589 / NCTC 13251).